A 154-amino-acid polypeptide reads, in one-letter code: 3-hydroxyacyl-[acyl-carrier-protein] dehydratase FabZ (154 aa).

The active site involves H54.

This sequence belongs to the thioester dehydratase family. FabZ subfamily.

The protein localises to the cytoplasm. The enzyme catalyses a (3R)-hydroxyacyl-[ACP] = a (2E)-enoyl-[ACP] + H2O. Its function is as follows. Involved in unsaturated fatty acids biosynthesis. Catalyzes the dehydration of short chain beta-hydroxyacyl-ACPs and long chain saturated and unsaturated beta-hydroxyacyl-ACPs. This chain is 3-hydroxyacyl-[acyl-carrier-protein] dehydratase FabZ, found in Shewanella sp. (strain MR-4).